The primary structure comprises 388 residues: Leucine aminopeptidase 1 (388 aa).

The signal sequence occupies residues 1–19; the sequence is MKLPALLILGVAASTMVLA. Positions 20–88 are excised as a propeptide; sequence AIAPDQVPLN…LPKVFPTPAV (69 aa). N96, N119, N149, N164, and N181 each carry an N-linked (GlcNAc...) asparagine glycan. Residues H189 and D207 each coordinate Zn(2+). N232 carries an N-linked (GlcNAc...) asparagine glycan. Zn(2+) is bound by residues E246 and D273. A disulfide bond links C322 and C326. H355 contacts Zn(2+).

Belongs to the peptidase M28 family. M28E subfamily. In terms of assembly, monomer. The cofactor is Zn(2+).

Its subcellular location is the secreted. Its function is as follows. Extracellular aminopeptidase that allows assimilation of proteinaceous substrates. The polypeptide is Leucine aminopeptidase 1 (LAP1) (Paracoccidioides brasiliensis (strain Pb03)).